The primary structure comprises 332 residues: Fructose-1,6-bisphosphatase class 1 (332 aa).

Residues E89, D110, L112, and D113 each contribute to the Mg(2+) site. Residues 113 to 116 (DGSS), N206, Y239, 257 to 259 (YLY), and K269 each bind substrate. E275 is a binding site for Mg(2+).

Belongs to the FBPase class 1 family. In terms of assembly, homotetramer. Mg(2+) serves as cofactor.

The protein localises to the cytoplasm. It carries out the reaction beta-D-fructose 1,6-bisphosphate + H2O = beta-D-fructose 6-phosphate + phosphate. It participates in carbohydrate biosynthesis; gluconeogenesis. The sequence is that of Fructose-1,6-bisphosphatase class 1 from Escherichia coli O157:H7.